Here is a 37-residue protein sequence, read N- to C-terminus: Large ribosomal subunit protein bL36 (37 aa).

Belongs to the bacterial ribosomal protein bL36 family.

The polypeptide is Large ribosomal subunit protein bL36 (Bordetella bronchiseptica (strain ATCC BAA-588 / NCTC 13252 / RB50) (Alcaligenes bronchisepticus)).